A 265-amino-acid polypeptide reads, in one-letter code: UPF0026 protein slr1464 (265 aa).

The Radical SAM core domain maps to Arg16–Ala252. [4Fe-4S] cluster contacts are provided by Cys32, Cys36, and Cys39. The tract at residues Arg204–Pro230 is disordered.

It belongs to the UPF0026 family. [4Fe-4S] cluster is required as a cofactor.

The protein is UPF0026 protein slr1464 of Synechocystis sp. (strain ATCC 27184 / PCC 6803 / Kazusa).